A 216-amino-acid polypeptide reads, in one-letter code: Methylthioribulose-1-phosphate dehydratase (216 aa).

Zn(2+) is bound by residues His101 and His103.

Belongs to the aldolase class II family. MtnB subfamily. Zn(2+) is required as a cofactor.

It catalyses the reaction 5-(methylsulfanyl)-D-ribulose 1-phosphate = 5-methylsulfanyl-2,3-dioxopentyl phosphate + H2O. It participates in amino-acid biosynthesis; L-methionine biosynthesis via salvage pathway; L-methionine from S-methyl-5-thio-alpha-D-ribose 1-phosphate: step 2/6. Its function is as follows. Catalyzes the dehydration of methylthioribulose-1-phosphate (MTRu-1-P) into 2,3-diketo-5-methylthiopentyl-1-phosphate (DK-MTP-1-P). The polypeptide is Methylthioribulose-1-phosphate dehydratase (Bradyrhizobium sp. (strain BTAi1 / ATCC BAA-1182)).